Consider the following 900-residue polypeptide: Alanine--tRNA ligase (900 aa).

The Zn(2+) site is built by histidine 604, histidine 608, cysteine 708, and histidine 712.

The protein belongs to the class-II aminoacyl-tRNA synthetase family. The cofactor is Zn(2+).

Its subcellular location is the cytoplasm. The catalysed reaction is tRNA(Ala) + L-alanine + ATP = L-alanyl-tRNA(Ala) + AMP + diphosphate. In terms of biological role, catalyzes the attachment of alanine to tRNA(Ala) in a two-step reaction: alanine is first activated by ATP to form Ala-AMP and then transferred to the acceptor end of tRNA(Ala). Also edits incorrectly charged Ser-tRNA(Ala) and Gly-tRNA(Ala) via its editing domain. The sequence is that of Alanine--tRNA ligase from Saccharolobus islandicus (strain L.S.2.15 / Lassen #1) (Sulfolobus islandicus).